A 1066-amino-acid chain; its full sequence is Beta-galactosidase (1066 aa).

Substrate is bound by residues N110 and D209. Residue D209 coordinates Na(+). E432, H434, and E477 together coordinate Mg(2+). Substrate contacts are provided by residues E477 and E553 to H556. E477 functions as the Proton donor in the catalytic mechanism. The active-site Nucleophile is E553. N613 contacts Mg(2+). Residues F617 and N620 each contribute to the Na(+) site. Substrate-binding residues include N620 and W1041.

Belongs to the glycosyl hydrolase 2 family. In terms of assembly, homotetramer. Requires Mg(2+) as cofactor. Na(+) serves as cofactor.

The enzyme catalyses Hydrolysis of terminal non-reducing beta-D-galactose residues in beta-D-galactosides.. The chain is Beta-galactosidase from Yersinia pseudotuberculosis serotype O:1b (strain IP 31758).